Here is a 173-residue protein sequence, read N- to C-terminus: Putative 4-hydroxy-4-methyl-2-oxoglutarate aldolase (173 aa).

Substrate-binding positions include 89 to 92 and Arg111; that span reads GGNL. Asp112 is a binding site for a divalent metal cation.

Belongs to the class II aldolase/RraA-like family. In terms of assembly, homotrimer. A divalent metal cation serves as cofactor.

The catalysed reaction is 4-hydroxy-4-methyl-2-oxoglutarate = 2 pyruvate. The enzyme catalyses oxaloacetate + H(+) = pyruvate + CO2. Its function is as follows. Catalyzes the aldol cleavage of 4-hydroxy-4-methyl-2-oxoglutarate (HMG) into 2 molecules of pyruvate. Also contains a secondary oxaloacetate (OAA) decarboxylase activity due to the common pyruvate enolate transition state formed following C-C bond cleavage in the retro-aldol and decarboxylation reactions. The polypeptide is Putative 4-hydroxy-4-methyl-2-oxoglutarate aldolase (Albidiferax ferrireducens (strain ATCC BAA-621 / DSM 15236 / T118) (Rhodoferax ferrireducens)).